Consider the following 370-residue polypeptide: 3-dehydroquinate synthase (370 aa).

Residues 112 to 116 (GVIGD), 136 to 137 (TT), Lys-149, Lys-158, and 176 to 179 (TLAT) each bind NAD(+). 3 residues coordinate Zn(2+): Glu-191, His-254, and His-276.

This sequence belongs to the sugar phosphate cyclases superfamily. Dehydroquinate synthase family. Co(2+) serves as cofactor. Requires Zn(2+) as cofactor. The cofactor is NAD(+).

It is found in the cytoplasm. The catalysed reaction is 7-phospho-2-dehydro-3-deoxy-D-arabino-heptonate = 3-dehydroquinate + phosphate. The protein operates within metabolic intermediate biosynthesis; chorismate biosynthesis; chorismate from D-erythrose 4-phosphate and phosphoenolpyruvate: step 2/7. Its function is as follows. Catalyzes the conversion of 3-deoxy-D-arabino-heptulosonate 7-phosphate (DAHP) to dehydroquinate (DHQ). The chain is 3-dehydroquinate synthase from Xylella fastidiosa (strain M12).